A 204-amino-acid polypeptide reads, in one-letter code: Allurin (204 aa).

Positions Met1–Gly19 are cleaved as a signal peptide. Residues Val36 to Val138 form the SCP domain. The chain crosses the membrane as a helical span at residues Trp140–Val161.

It belongs to the CRISP family. In terms of tissue distribution, expressed only in oviduct.

The protein resides in the membrane. Its subcellular location is the secreted. Functionally, involved in sperm chemoattraction. In Xenopus tropicalis (Western clawed frog), this protein is Allurin (crisp-a).